Reading from the N-terminus, the 258-residue chain is Ditrans,polycis-undecaprenyl-diphosphate synthase ((2E,6E)-farnesyl-diphosphate specific) (258 aa).

Asp24 is a catalytic residue. Residue Asp24 participates in Mg(2+) binding. Substrate is bound by residues 25–28, Trp29, Arg37, His41, and 69–71; these read GNGR and SSE. Asn72 (proton acceptor) is an active-site residue. Substrate is bound by residues Trp73, Arg75, Arg192, and 198–200; that span reads RIS. Glu211 is a Mg(2+) binding site.

The protein belongs to the UPP synthase family. In terms of assembly, homodimer. The cofactor is Mg(2+).

The enzyme catalyses 8 isopentenyl diphosphate + (2E,6E)-farnesyl diphosphate = di-trans,octa-cis-undecaprenyl diphosphate + 8 diphosphate. Functionally, catalyzes the sequential condensation of isopentenyl diphosphate (IPP) with (2E,6E)-farnesyl diphosphate (E,E-FPP) to yield (2Z,6Z,10Z,14Z,18Z,22Z,26Z,30Z,34E,38E)-undecaprenyl diphosphate (di-trans,octa-cis-UPP). UPP is the precursor of glycosyl carrier lipid in the biosynthesis of bacterial cell wall polysaccharide components such as peptidoglycan and lipopolysaccharide. The protein is Ditrans,polycis-undecaprenyl-diphosphate synthase ((2E,6E)-farnesyl-diphosphate specific) of Xanthomonas campestris pv. campestris (strain ATCC 33913 / DSM 3586 / NCPPB 528 / LMG 568 / P 25).